A 695-amino-acid chain; its full sequence is MAP kinase phosphatase with leucine-rich repeats protein 2 (695 aa).

LRR repeat units follow at residues 101 to 122, 124 to 145, 147 to 167, 170 to 191, 193 to 214, 215 to 235, 239 to 260, 262 to 283, 286 to 307, and 309 to 330; these read SLKSLILDFNKITEIPDCITLL, NLNHLSLAANQLTHVPEFLSQL, SLETFEIGINQFTCFPLNVCK, SLTSLHLETNNIKSLPEEFLNL, NLKDLSLFDNQLKEIPDSLPNN, IEKLNLGCNDISSSKSDSLIR, SLTTLNLSENKIEELDESLSCL, NVKTLMLDCNMIKVIPGSVLGS, SLVTLNLPHNLISDLPPEVILL, and NLRIIDLRGNNFENCKKLIPTE. Over residues 413–426 the composition is skewed to low complexity; the sequence is SENNEINENNQLLT. 2 disordered regions span residues 413-438 and 492-519; these read SENNEINENNQLLTTDDDYNTDKNDS and QEQLPQSKPENEKLTNIPEQQQKQQQQQ. The Tyrosine-protein phosphatase domain maps to 556–695; sequence VPDLIIDKLY…LKKFEKDLFK (140 aa). The Phosphocysteine intermediate role is filled by cysteine 639.

The protein belongs to the protein-tyrosine phosphatase family. Non-receptor class dual specificity subfamily.

It catalyses the reaction O-phospho-L-tyrosyl-[protein] + H2O = L-tyrosyl-[protein] + phosphate. The enzyme catalyses O-phospho-L-seryl-[protein] + H2O = L-seryl-[protein] + phosphate. It carries out the reaction O-phospho-L-threonyl-[protein] + H2O = L-threonyl-[protein] + phosphate. Its function is as follows. Probable phosphatase with dual specificity toward Ser/Thr and Tyr-containing proteins. The chain is MAP kinase phosphatase with leucine-rich repeats protein 2 (mpl2) from Dictyostelium discoideum (Social amoeba).